Consider the following 303-residue polypeptide: Cytochrome c oxidase subunit 2 (303 aa).

An N-terminal signal peptide occupies residues Met1–Ala25. 2 helical membrane-spanning segments follow: residues Phe60–Val80 and Trp104–Phe124. The Cu cation site is built by His217, Cys252, Cys256, and His260.

Belongs to the cytochrome c oxidase subunit 2 family. It depends on Cu cation as a cofactor.

It localises to the cell membrane. The enzyme catalyses 4 Fe(II)-[cytochrome c] + O2 + 8 H(+)(in) = 4 Fe(III)-[cytochrome c] + 2 H2O + 4 H(+)(out). Its function is as follows. Subunits I and II form the functional core of the enzyme complex. Electrons originating in cytochrome c are transferred via heme a and Cu(A) to the binuclear center formed by heme a3 and Cu(B). This chain is Cytochrome c oxidase subunit 2 (ctaC), found in Cereibacter sphaeroides (Rhodobacter sphaeroides).